Reading from the N-terminus, the 181-residue chain is Adenine phosphoribosyltransferase (181 aa).

Belongs to the purine/pyrimidine phosphoribosyltransferase family. Homodimer.

The protein resides in the cytoplasm. The enzyme catalyses AMP + diphosphate = 5-phospho-alpha-D-ribose 1-diphosphate + adenine. It participates in purine metabolism; AMP biosynthesis via salvage pathway; AMP from adenine: step 1/1. Catalyzes a salvage reaction resulting in the formation of AMP, that is energically less costly than de novo synthesis. This chain is Adenine phosphoribosyltransferase, found in Aeromonas salmonicida (strain A449).